The following is a 496-amino-acid chain: Glycerol kinase (496 aa).

T11 is a binding site for ADP. Positions 11, 12, and 13 each coordinate ATP. Residue T11 coordinates sn-glycerol 3-phosphate. Residue R15 coordinates ADP. Positions 81, 82, 133, and 242 each coordinate sn-glycerol 3-phosphate. Glycerol is bound by residues R81, E82, Y133, D242, and Q243. 2 residues coordinate ADP: T264 and G307. 4 residues coordinate ATP: T264, G307, Q311, and G408. G408 and N412 together coordinate ADP.

The protein belongs to the FGGY kinase family.

The enzyme catalyses glycerol + ATP = sn-glycerol 3-phosphate + ADP + H(+). It functions in the pathway polyol metabolism; glycerol degradation via glycerol kinase pathway; sn-glycerol 3-phosphate from glycerol: step 1/1. Inhibited by fructose 1,6-bisphosphate (FBP). Functionally, key enzyme in the regulation of glycerol uptake and metabolism. Catalyzes the phosphorylation of glycerol to yield sn-glycerol 3-phosphate. This is Glycerol kinase from Aromatoleum aromaticum (strain DSM 19018 / LMG 30748 / EbN1) (Azoarcus sp. (strain EbN1)).